Here is a 146-residue protein sequence, read N- to C-terminus: Ribosome-binding factor A (146 aa).

Residues 125–146 (RDLDADDDKTKDDRAKDDKDSE) form a disordered region.

This sequence belongs to the RbfA family. As to quaternary structure, monomer. Binds 30S ribosomal subunits, but not 50S ribosomal subunits or 70S ribosomes.

It is found in the cytoplasm. One of several proteins that assist in the late maturation steps of the functional core of the 30S ribosomal subunit. Associates with free 30S ribosomal subunits (but not with 30S subunits that are part of 70S ribosomes or polysomes). Required for efficient processing of 16S rRNA. May interact with the 5'-terminal helix region of 16S rRNA. In Mesorhizobium japonicum (strain LMG 29417 / CECT 9101 / MAFF 303099) (Mesorhizobium loti (strain MAFF 303099)), this protein is Ribosome-binding factor A.